The following is a 291-amino-acid chain: Ribosomal RNA small subunit methyltransferase A (291 aa).

Residues H37, L39, G64, E85, D110, and N131 each coordinate S-adenosyl-L-methionine.

It belongs to the class I-like SAM-binding methyltransferase superfamily. rRNA adenine N(6)-methyltransferase family. RsmA subfamily.

The protein resides in the cytoplasm. The catalysed reaction is adenosine(1518)/adenosine(1519) in 16S rRNA + 4 S-adenosyl-L-methionine = N(6)-dimethyladenosine(1518)/N(6)-dimethyladenosine(1519) in 16S rRNA + 4 S-adenosyl-L-homocysteine + 4 H(+). Specifically dimethylates two adjacent adenosines (A1518 and A1519) in the loop of a conserved hairpin near the 3'-end of 16S rRNA in the 30S particle. May play a critical role in biogenesis of 30S subunits. In Dehalococcoides mccartyi (strain ATCC BAA-2100 / JCM 16839 / KCTC 5957 / BAV1), this protein is Ribosomal RNA small subunit methyltransferase A.